The chain runs to 338 residues: Holliday junction branch migration complex subunit RuvB (338 aa).

The tract at residues Met-1–Tyr-184 is large ATPase domain (RuvB-L). ATP is bound by residues Leu-23, Arg-24, Gly-65, Lys-68, Thr-69, Thr-70, Glu-131–Phe-133, Arg-174, Tyr-184, and Arg-221. Thr-69 provides a ligand contact to Mg(2+). The segment at Gln-185–Gln-255 is small ATPAse domain (RuvB-S). Residues His-258–Asn-338 are head domain (RuvB-H). Arg-313 and Arg-318 together coordinate DNA.

This sequence belongs to the RuvB family. In terms of assembly, homohexamer. Forms an RuvA(8)-RuvB(12)-Holliday junction (HJ) complex. HJ DNA is sandwiched between 2 RuvA tetramers; dsDNA enters through RuvA and exits via RuvB. An RuvB hexamer assembles on each DNA strand where it exits the tetramer. Each RuvB hexamer is contacted by two RuvA subunits (via domain III) on 2 adjacent RuvB subunits; this complex drives branch migration. In the full resolvosome a probable DNA-RuvA(4)-RuvB(12)-RuvC(2) complex forms which resolves the HJ.

It is found in the cytoplasm. The catalysed reaction is ATP + H2O = ADP + phosphate + H(+). In terms of biological role, the RuvA-RuvB-RuvC complex processes Holliday junction (HJ) DNA during genetic recombination and DNA repair, while the RuvA-RuvB complex plays an important role in the rescue of blocked DNA replication forks via replication fork reversal (RFR). RuvA specifically binds to HJ cruciform DNA, conferring on it an open structure. The RuvB hexamer acts as an ATP-dependent pump, pulling dsDNA into and through the RuvAB complex. RuvB forms 2 homohexamers on either side of HJ DNA bound by 1 or 2 RuvA tetramers; 4 subunits per hexamer contact DNA at a time. Coordinated motions by a converter formed by DNA-disengaged RuvB subunits stimulates ATP hydrolysis and nucleotide exchange. Immobilization of the converter enables RuvB to convert the ATP-contained energy into a lever motion, pulling 2 nucleotides of DNA out of the RuvA tetramer per ATP hydrolyzed, thus driving DNA branch migration. The RuvB motors rotate together with the DNA substrate, which together with the progressing nucleotide cycle form the mechanistic basis for DNA recombination by continuous HJ branch migration. Branch migration allows RuvC to scan DNA until it finds its consensus sequence, where it cleaves and resolves cruciform DNA. The polypeptide is Holliday junction branch migration complex subunit RuvB (Enterococcus faecalis (strain ATCC 700802 / V583)).